A 279-amino-acid chain; its full sequence is Tryptophan synthase alpha chain (279 aa).

Residues glutamate 50 and aspartate 61 each act as proton acceptor in the active site.

Belongs to the TrpA family. As to quaternary structure, tetramer of two alpha and two beta chains.

It catalyses the reaction (1S,2R)-1-C-(indol-3-yl)glycerol 3-phosphate + L-serine = D-glyceraldehyde 3-phosphate + L-tryptophan + H2O. It functions in the pathway amino-acid biosynthesis; L-tryptophan biosynthesis; L-tryptophan from chorismate: step 5/5. The alpha subunit is responsible for the aldol cleavage of indoleglycerol phosphate to indole and glyceraldehyde 3-phosphate. The sequence is that of Tryptophan synthase alpha chain from Sinorhizobium fredii (strain NBRC 101917 / NGR234).